A 104-amino-acid chain; its full sequence is Flagellar hook-basal body complex protein FliE (104 aa).

This sequence belongs to the FliE family.

It is found in the bacterial flagellum basal body. The sequence is that of Flagellar hook-basal body complex protein FliE from Escherichia coli O6:K15:H31 (strain 536 / UPEC).